A 263-amino-acid chain; its full sequence is Putative cysteine-rich repeat secretory protein 31 (263 aa).

An N-terminal signal peptide occupies residues 1–32; that stretch reads MHNSYSLSKRLVLVLFLAVVATQLFLIRNVSS. Gnk2-homologous domains are found at residues 39 to 141 and 146 to 260; these read YLHH…AIEV and YDNN…FYPF.

This sequence belongs to the cysteine-rich repeat secretory protein family.

It localises to the secreted. The protein is Putative cysteine-rich repeat secretory protein 31 (CRRSP31) of Arabidopsis thaliana (Mouse-ear cress).